Reading from the N-terminus, the 480-residue chain is NADH-quinone oxidoreductase subunit N (480 aa).

14 helical membrane-spanning segments follow: residues 11–31 (LLPE…GVFA), 38–58 (LVAA…AGLL), 76–96 (FALY…IAAA), 105–125 (APEY…LVSM), 128–148 (LFGV…MVAF), 163–183 (LITG…IYGV), 195–215 (AFGE…ISGL), 240–260 (AAFL…RILL), 270–290 (WTAL…LLAL), 298–318 (MLAY…AALQ), 329–349 (VMIY…TIDL), 368–388 (AAAM…SGFF), 407–427 (VAVA…FGII), and 453–473 (VYAM…LAAL).

The protein belongs to the complex I subunit 2 family. NDH-1 is composed of 14 different subunits. Subunits NuoA, H, J, K, L, M, N constitute the membrane sector of the complex.

The protein localises to the cell membrane. It catalyses the reaction a quinone + NADH + 5 H(+)(in) = a quinol + NAD(+) + 4 H(+)(out). In terms of biological role, NDH-1 shuttles electrons from NADH, via FMN and iron-sulfur (Fe-S) centers, to quinones in the respiratory chain. The immediate electron acceptor for the enzyme in this species is believed to be a menaquinone. Couples the redox reaction to proton translocation (for every two electrons transferred, four hydrogen ions are translocated across the cytoplasmic membrane), and thus conserves the redox energy in a proton gradient. This Rubrobacter xylanophilus (strain DSM 9941 / JCM 11954 / NBRC 16129 / PRD-1) protein is NADH-quinone oxidoreductase subunit N.